Here is a 411-residue protein sequence, read N- to C-terminus: 2,3-bisphosphoglycerate-independent phosphoglycerate mutase (411 aa).

It belongs to the BPG-independent phosphoglycerate mutase family. A-PGAM subfamily.

The catalysed reaction is (2R)-2-phosphoglycerate = (2R)-3-phosphoglycerate. It functions in the pathway carbohydrate degradation; glycolysis; pyruvate from D-glyceraldehyde 3-phosphate: step 3/5. In terms of biological role, catalyzes the interconversion of 2-phosphoglycerate and 3-phosphoglycerate. In Pyrobaculum aerophilum (strain ATCC 51768 / DSM 7523 / JCM 9630 / CIP 104966 / NBRC 100827 / IM2), this protein is 2,3-bisphosphoglycerate-independent phosphoglycerate mutase.